A 612-amino-acid chain; its full sequence is Adherence factor (612 aa).

Composition is skewed to low complexity over residues 1 to 18, 47 to 68, 94 to 106, 115 to 141, 182 to 203, and 218 to 228; these read MSSFNSNSNPANAQNLSS, SSMMQQSQQGQPQSQTSQQQQQ, LQTQQPSSSSATT, YNQQQSQQQQQQQQQYQQMQPQPNNMQ, QSAQPISHSQPQPQPQATQPRS, and SRQVSGSGRST. 7 disordered regions span residues 1–20, 46–68, 94–143, 179–273, 443–480, 497–527, and 546–612; these read MSSFNSNSNPANAQNLSSFQ, ASSMMQQSQQGQPQSQTSQQQQQ, LQTQ…MQFF, PQLQ…NNNK, KEKKLTEKTIEQREQQRKKRASANHSPPDSDSITNTNN, SQLMPNQNTGSGATKISSTTPPPPSQALSNN, and SQEQ…KQFY. Residues 230 to 240 show a composition bias toward polar residues; it reads AKKQSAITSGS. Over residues 254–272 the composition is skewed to low complexity; sequence TSVANSTSTTTMTTTNNNN. Basic and acidic residues predominate over residues 443–457; the sequence is KEKKLTEKTIEQREQ. Composition is skewed to polar residues over residues 465–480 and 497–512; these read ANHSPPDSDSITNTNN and SQLMPNQNTGSGATKI. Positions 555 to 571 are enriched in basic residues; sequence NQHHHNHQQHPLIHHHQ. The span at 585 to 606 shows a compositional bias: low complexity; sequence PSTIPTSSLSIQQQQQQQQQQL.

Surface antigen mediating adhesion and aggregation in S.cerevisiae. This is Adherence factor (ADF1) from Candida albicans (strain SC5314 / ATCC MYA-2876) (Yeast).